Reading from the N-terminus, the 600-residue chain is Alanine--tRNA ligase (600 aa).

Positions 463, 467, 565, and 569 each coordinate Zn(2+).

This sequence belongs to the class-II aminoacyl-tRNA synthetase family. Zn(2+) serves as cofactor.

The protein resides in the cytoplasm. It carries out the reaction tRNA(Ala) + L-alanine + ATP = L-alanyl-tRNA(Ala) + AMP + diphosphate. In terms of biological role, catalyzes the attachment of alanine to tRNA(Ala) in a two-step reaction: alanine is first activated by ATP to form Ala-AMP and then transferred to the acceptor end of tRNA(Ala). Also edits incorrectly charged Ser-tRNA(Ala) and Gly-tRNA(Ala) via its editing domain. This Treponema denticola (strain ATCC 35405 / DSM 14222 / CIP 103919 / JCM 8153 / KCTC 15104) protein is Alanine--tRNA ligase (alaS).